Reading from the N-terminus, the 214-residue chain is GTP-binding nuclear protein GSP1/Ran (214 aa).

Residues Glu-4–Asn-168 form the Small GTPase Ran-type domain. Asp-15–Thr-22 is a binding site for GTP. The switch-I stretch occupies residues Lys-34–Val-42. GTP is bound by residues Gly-65, Asn-119 to Asp-122, and Ser-147 to Lys-149. Residues Gly-65–Gln-81 form a switch-II region.

Belongs to the small GTPase superfamily. Ran family. As to quaternary structure, found in a nuclear export complex with RanGTP, exportin and pre-miRNA.

The protein resides in the nucleus. In terms of biological role, GTP-binding protein involved in nucleocytoplasmic transport. Required for the import of protein into the nucleus and also for RNA export. Involved in chromatin condensation and control of cell cycle. In Eremothecium gossypii (strain ATCC 10895 / CBS 109.51 / FGSC 9923 / NRRL Y-1056) (Yeast), this protein is GTP-binding nuclear protein GSP1/Ran (GSP1).